The chain runs to 65 residues: Small ribosomal subunit protein bS21 (65 aa).

The segment at 45-65 is disordered; that stretch reads GRLKRSRSKRRAQRANEERNS. The segment covering 48–57 has biased composition (basic residues); it reads KRSRSKRRAQ.

This sequence belongs to the bacterial ribosomal protein bS21 family.

The polypeptide is Small ribosomal subunit protein bS21 (Chlorobium luteolum (strain DSM 273 / BCRC 81028 / 2530) (Pelodictyon luteolum)).